Consider the following 268-residue polypeptide: Hydroxyethylthiazole kinase (268 aa).

Residue M47 participates in substrate binding. ATP-binding residues include K123 and T170. Residue A196 participates in substrate binding.

It belongs to the Thz kinase family. Mg(2+) serves as cofactor.

The enzyme catalyses 5-(2-hydroxyethyl)-4-methylthiazole + ATP = 4-methyl-5-(2-phosphooxyethyl)-thiazole + ADP + H(+). The protein operates within cofactor biosynthesis; thiamine diphosphate biosynthesis; 4-methyl-5-(2-phosphoethyl)-thiazole from 5-(2-hydroxyethyl)-4-methylthiazole: step 1/1. In terms of biological role, catalyzes the phosphorylation of the hydroxyl group of 4-methyl-5-beta-hydroxyethylthiazole (THZ). The protein is Hydroxyethylthiazole kinase of Finegoldia magna (strain ATCC 29328 / DSM 20472 / WAL 2508) (Peptostreptococcus magnus).